A 429-amino-acid polypeptide reads, in one-letter code: 3-isopropylmalate dehydratase large subunit (429 aa).

Residues cysteine 303, cysteine 363, and cysteine 366 each coordinate [4Fe-4S] cluster.

Belongs to the aconitase/IPM isomerase family. LeuC type 2 subfamily. Heterodimer of LeuC and LeuD. It depends on [4Fe-4S] cluster as a cofactor.

It carries out the reaction (2R,3S)-3-isopropylmalate = (2S)-2-isopropylmalate. It functions in the pathway amino-acid biosynthesis; L-leucine biosynthesis; L-leucine from 3-methyl-2-oxobutanoate: step 2/4. Its function is as follows. Catalyzes the isomerization between 2-isopropylmalate and 3-isopropylmalate, via the formation of 2-isopropylmaleate. This Caldicellulosiruptor saccharolyticus (strain ATCC 43494 / DSM 8903 / Tp8T 6331) protein is 3-isopropylmalate dehydratase large subunit.